The chain runs to 189 residues: Large ribosomal subunit protein uL6 (189 aa).

Belongs to the universal ribosomal protein uL6 family. In terms of assembly, part of the 50S ribosomal subunit.

Functionally, this protein binds to the 23S rRNA, and is important in its secondary structure. It is located near the subunit interface in the base of the L7/L12 stalk, and near the tRNA binding site of the peptidyltransferase center. This is Large ribosomal subunit protein uL6 from Phocaeicola vulgatus (strain ATCC 8482 / DSM 1447 / JCM 5826 / CCUG 4940 / NBRC 14291 / NCTC 11154) (Bacteroides vulgatus).